The primary structure comprises 499 residues: MVPVVALVGRPNVGKSTLFNRLTRTRDALVADFPGLTRDRKYGRAEIEGREFICIDTGGIDGNEEGVETRMAEQSLLAIEEADVVLFMVDARAGLMPADTAIAKHLRSRQKPTFLVANKTDGLDADSAVVDFWSLGLGEIHPIAASHGRGVTSLLELVLLPWMDEVVPQRELTEEEENAAYWAELAAKEAKVNGEATADEEDDFNPLDLPIKLAIVGRPNVGKSTLTNRILGEDRVVVFDMPGTTRDSIYIPMERDGREYILIDTAGVRKRGKVTETVEKFSVIKTLQAIEDANVVMLVIDAHEGISDQDLSLLGFILNSGRSLVIVVNKWDGLSQEVRDEVKEALDYRLGFIDFARIHFISALHGSGVGNLFESVTEAYDCSTRRVNTSMLTRIMHMAADDHQPPLVRSRRVKLKYAHAGGYNPPIVVIHGNQVKDLPDSYKRYLMNYFRRSLDIMGTPIRIQFKEGDNPYEGKRNLLTPNQQRKRQRLMSHLKKNKR.

EngA-type G domains follow at residues 3–166 (PVVA…MDEV) and 211–384 (IKLA…DCST). GTP contacts are provided by residues 9-16 (GRPNVGKS), 56-60 (DTGGI), 118-121 (NKTD), 217-224 (GRPNVGKS), 264-268 (DTAGV), and 329-332 (NKWD). In terms of domain architecture, KH-like spans 385–469 (RRVNTSMLTR…PIRIQFKEGD (85 aa)).

It belongs to the TRAFAC class TrmE-Era-EngA-EngB-Septin-like GTPase superfamily. EngA (Der) GTPase family. As to quaternary structure, associates with the 50S ribosomal subunit.

Functionally, GTPase that plays an essential role in the late steps of ribosome biogenesis. The protein is GTPase Der of Erwinia tasmaniensis (strain DSM 17950 / CFBP 7177 / CIP 109463 / NCPPB 4357 / Et1/99).